The chain runs to 436 residues: Bifunctional IPC transferase and DIPP synthase (436 aa).

The interval 11 to 241 (GVGAAVLAAG…LSEEMVLGWA (231 aa)) is mobA-like NTP transferase. Residues 17 to 19 (LAA) and Lys-32 contribute to the CTP site. A CDP-alcohol phosphatidyltransferases region spans residues 242–435 (ASGNDGPVSR…RRLLALKRGR (194 aa)). Transmembrane regions (helical) follow at residues 275 to 295 (VSLL…AGRL), 349 to 371 (AGTR…VSYT), and 397 to 417 (LAVL…LATG).

The protein in the N-terminal section; belongs to the MobA family. This sequence in the C-terminal section; belongs to the CDP-alcohol phosphatidyltransferase class-I family.

It is found in the membrane. It catalyses the reaction 1D-myo-inositol 3-phosphate + CTP + H(+) = CDP-1L-myo-inositol + diphosphate. The catalysed reaction is CDP-1L-myo-inositol + 1D-myo-inositol 3-phosphate = bis(1L-myo-inositol) 3,1'-phosphate 1-phosphate + CMP + H(+). Functionally, involved in biosynthesis of di-myo-inositol phosphate (DIP), a widespread organic solute in microorganisms adapted to hot environments. Catalyzes the condensation of CTP and L-myo-inositol-1-phosphate into CDP-L-myo-inositol, as well as the biosynthesis of di-myo-inositol-1,3'-phosphate-1'-phosphate (DIPP) from CDP-L-myo-inositol and L-myo-inositol-1-phosphate. This is Bifunctional IPC transferase and DIPP synthase from Rubrobacter xylanophilus (strain DSM 9941 / JCM 11954 / NBRC 16129 / PRD-1).